We begin with the raw amino-acid sequence, 507 residues long: ATP synthase subunit alpha, chloroplastic (507 aa).

Position 169–176 (169–176) interacts with ATP; that stretch reads IGDRQTGK.

The protein belongs to the ATPase alpha/beta chains family. In terms of assembly, F-type ATPases have 2 components, CF(1) - the catalytic core - and CF(0) - the membrane proton channel. CF(1) has five subunits: alpha(3), beta(3), gamma(1), delta(1), epsilon(1). CF(0) has four main subunits: a, b, b' and c.

It is found in the plastid. The protein localises to the chloroplast thylakoid membrane. It carries out the reaction ATP + H2O + 4 H(+)(in) = ADP + phosphate + 5 H(+)(out). Its function is as follows. Produces ATP from ADP in the presence of a proton gradient across the membrane. The alpha chain is a regulatory subunit. This Saccharum hybrid (Sugarcane) protein is ATP synthase subunit alpha, chloroplastic.